The primary structure comprises 83 residues: U-actitoxin-Avd8d (83 aa).

Positions 1 to 19 (MASTRLFVLLVIGTVLLCQ) are cleaved as a signal peptide. The propeptide occupies 20 to 38 (VSGFLDELLAEHELPQDMT).

Belongs to the sea anemone 8 toxin family.

The protein localises to the secreted. It is found in the nematocyst. The chain is U-actitoxin-Avd8d from Anemonia viridis (Snakelocks anemone).